Reading from the N-terminus, the 710-residue chain is Dual specificity protein kinase shkE (710 aa).

3 stretches are compositionally biased toward low complexity: residues 83–94, 107–129, and 197–208; these read DVSDSNNNNSTS, NNNN…NNNN, and QKQQQSQASIQQ. 2 disordered regions span residues 83–136 and 189–232; these read DVSD…PTVI and QHLT…IPPE. The 259-residue stretch at 237–495 folds into the Protein kinase domain; it reads DVKTDLLGGG…EVTQRMNEVL (259 aa). ATP contacts are provided by residues 243–251 and Lys264; that span reads LGGGAYGKV. Asp359 functions as the Proton acceptor in the catalytic mechanism. The SH2 domain occupies 597 to 707; it reads WFHFDISRDI…CPITEIKVPY (111 aa).

It belongs to the protein kinase superfamily. Ser/Thr protein kinase family. SH2 domain-containing protein kinase subfamily.

The protein resides in the membrane. The enzyme catalyses L-seryl-[protein] + ATP = O-phospho-L-seryl-[protein] + ADP + H(+). It carries out the reaction L-threonyl-[protein] + ATP = O-phospho-L-threonyl-[protein] + ADP + H(+). In terms of biological role, required for proper chemotaxis and phagocytosis; proper spatiotemporal control of F-actin levels in chemotaxing cells. Negative regulator of the PI3K (phosphatidylinositol 3 kinase) pathway. Predominantly phosphorylates serines and threonines and tyrosines at a lower level. This is Dual specificity protein kinase shkE (shkE) from Dictyostelium discoideum (Social amoeba).